Consider the following 106-residue polypeptide: MRVVRQSGSALSRAKKSRKYTSYRVMNVVLNTLFSFVLAPYIHYILEEISPQWTTREMNTEICFLAKFSFLLVFLFYLNFQGFNSVSNITTSSSPTYDNNRHYGND.

2 helical membrane-spanning segments follow: residues 25 to 45 (VMNVVLNTLFSFVLAPYIHYI) and 62 to 82 (ICFLAKFSFLLVFLFYLNFQG).

The protein resides in the membrane. This is an uncharacterized protein from Saccharomyces cerevisiae (strain ATCC 204508 / S288c) (Baker's yeast).